A 121-amino-acid chain; its full sequence is Small ribosomal subunit protein uS12c (121 aa).

This sequence belongs to the universal ribosomal protein uS12 family. As to quaternary structure, part of the 30S ribosomal subunit.

It localises to the plastid. Its subcellular location is the apicoplast. Its function is as follows. With S4 and S5 plays an important role in translational accuracy. Located at the interface of the 30S and 50S subunits. The protein is Small ribosomal subunit protein uS12c (rps12) of Toxoplasma gondii.